A 342-amino-acid chain; its full sequence is Anthranilate phosphoribosyltransferase (342 aa).

5-phospho-alpha-D-ribose 1-diphosphate is bound by residues Gly-90, 93–94 (GS), Thr-98, 100–103 (NIST), 118–126 (KHGNRRATS), and Ser-130. Gly-90 contributes to the anthranilate binding site. Ser-102 is a Mg(2+) binding site. An anthranilate-binding site is contributed by Asn-121. An anthranilate-binding site is contributed by Arg-176. Mg(2+) is bound by residues Asp-235 and Glu-236.

Belongs to the anthranilate phosphoribosyltransferase family. Homodimer. Mg(2+) serves as cofactor.

It carries out the reaction N-(5-phospho-beta-D-ribosyl)anthranilate + diphosphate = 5-phospho-alpha-D-ribose 1-diphosphate + anthranilate. The protein operates within amino-acid biosynthesis; L-tryptophan biosynthesis; L-tryptophan from chorismate: step 2/5. Functionally, catalyzes the transfer of the phosphoribosyl group of 5-phosphorylribose-1-pyrophosphate (PRPP) to anthranilate to yield N-(5'-phosphoribosyl)-anthranilate (PRA). The protein is Anthranilate phosphoribosyltransferase of Rhodopirellula baltica (strain DSM 10527 / NCIMB 13988 / SH1).